We begin with the raw amino-acid sequence, 258 residues long: Pimeloyl-[acyl-carrier protein] methyl ester esterase (258 aa).

In terms of domain architecture, AB hydrolase-1 spans 16 to 242; that stretch reads LVLLHGWGLN…AAHAPFISHP (227 aa). Residues Trp22, 82–83, and 143–147 each bind substrate; these read SM and FLALQ. The Nucleophile role is filled by Ser82. Residues Asp207 and His235 contribute to the active site. Substrate is bound at residue His235.

This sequence belongs to the AB hydrolase superfamily. Carboxylesterase BioH family. Monomer.

It is found in the cytoplasm. The catalysed reaction is 6-carboxyhexanoyl-[ACP] methyl ester + H2O = 6-carboxyhexanoyl-[ACP] + methanol + H(+). Its pathway is cofactor biosynthesis; biotin biosynthesis. In terms of biological role, the physiological role of BioH is to remove the methyl group introduced by BioC when the pimeloyl moiety is complete. It allows to synthesize pimeloyl-ACP via the fatty acid synthetic pathway through the hydrolysis of the ester bonds of pimeloyl-ACP esters. This chain is Pimeloyl-[acyl-carrier protein] methyl ester esterase, found in Yersinia pseudotuberculosis serotype IB (strain PB1/+).